We begin with the raw amino-acid sequence, 773 residues long: Leucine-rich repeat-containing protein let-4 (773 aa).

An N-terminal signal peptide occupies residues 1–20 (MRLLLCLLLFSTLLINSTNA). Over 21–689 (CPGVITQACF…RLEKSFFTTT (669 aa)) the chain is Extracellular. 16 LRR repeats span residues 61 to 84 (VGLI…FFSG), 85 to 107 (LFIR…AFAG), 109 to 132 (NPVL…ALAG), 133 to 157 (LPNL…IFPN), 159 to 181 (NKLY…TFQN), 183 to 206 (KNSI…AIRG), 207 to 230 (LKQL…NFLN), 231 to 254 (LPVL…AFLN), 256 to 278 (PSLR…QFQT), 279 to 302 (FEQL…SLSG), 303 to 326 (LKQL…AFTN), 328 to 349 (SIVV…IISG), 350 to 373 (LPNL…AFYD), 375 to 397 (ASLV…TFLA), 399 to 421 (LNLL…AFNS), and 486 to 516 (LVQI…AFQQ). A helical membrane pass occupies residues 690–710 (IIFICVGTAVIVLVVVIAGLC). At 711–773 (ISKHRQLQFE…PGSSYCNYYK (63 aa)) the chain is on the cytoplasmic side.

In L1 larvae, expressed in a subset of epithelial cells including epidermal, vulval and rectal cells and the excretory duct and pore. Absent from internal epithelia such as the gut and pharyngeal tubes. Transiently expressed in the excretory canal cell at the 1.5-fold embryonic stage but no longer visible in this cell at hatching.

It localises to the apical cell membrane. In terms of biological role, required for apical extracellular matrix organization and epithelial junction maintenance. The sequence is that of Leucine-rich repeat-containing protein let-4 (let-4) from Caenorhabditis elegans.